The following is a 962-amino-acid chain: Glycine dehydrogenase (decarboxylating) (962 aa).

At lysine 709 the chain carries N6-(pyridoxal phosphate)lysine.

It belongs to the GcvP family. As to quaternary structure, the glycine cleavage system is composed of four proteins: P, T, L and H. The cofactor is pyridoxal 5'-phosphate.

It carries out the reaction N(6)-[(R)-lipoyl]-L-lysyl-[glycine-cleavage complex H protein] + glycine + H(+) = N(6)-[(R)-S(8)-aminomethyldihydrolipoyl]-L-lysyl-[glycine-cleavage complex H protein] + CO2. The glycine cleavage system catalyzes the degradation of glycine. The P protein binds the alpha-amino group of glycine through its pyridoxal phosphate cofactor; CO(2) is released and the remaining methylamine moiety is then transferred to the lipoamide cofactor of the H protein. This is Glycine dehydrogenase (decarboxylating) from Shewanella pealeana (strain ATCC 700345 / ANG-SQ1).